The sequence spans 198 residues: Ribonuclease HII (198 aa).

The region spanning 1–198 (MLCGIDEAGR…QRRSFFVKNL (198 aa)) is the RNase H type-2 domain. Aspartate 6, glutamate 7, and aspartate 112 together coordinate a divalent metal cation.

Belongs to the RNase HII family. Mn(2+) serves as cofactor. Requires Mg(2+) as cofactor.

It is found in the cytoplasm. The enzyme catalyses Endonucleolytic cleavage to 5'-phosphomonoester.. In terms of biological role, endonuclease that specifically degrades the RNA of RNA-DNA hybrids. The chain is Ribonuclease HII from Treponema denticola (strain ATCC 35405 / DSM 14222 / CIP 103919 / JCM 8153 / KCTC 15104).